The sequence spans 172 residues: Adenine phosphoribosyltransferase (172 aa).

It belongs to the purine/pyrimidine phosphoribosyltransferase family. In terms of assembly, homodimer.

The protein resides in the cytoplasm. The catalysed reaction is AMP + diphosphate = 5-phospho-alpha-D-ribose 1-diphosphate + adenine. It participates in purine metabolism; AMP biosynthesis via salvage pathway; AMP from adenine: step 1/1. Catalyzes a salvage reaction resulting in the formation of AMP, that is energically less costly than de novo synthesis. This Polynucleobacter asymbioticus (strain DSM 18221 / CIP 109841 / QLW-P1DMWA-1) (Polynucleobacter necessarius subsp. asymbioticus) protein is Adenine phosphoribosyltransferase.